A 65-amino-acid polypeptide reads, in one-letter code: UPF0434 protein HS_0657 (65 aa).

This sequence belongs to the UPF0434 family.

In Histophilus somni (strain 129Pt) (Haemophilus somnus), this protein is UPF0434 protein HS_0657.